Reading from the N-terminus, the 359-residue chain is Protein LpfD (359 aa).

Residues M1–A24 form the signal peptide.

The protein belongs to the fimbrial protein family.

The protein resides in the fimbrium. This chain is Protein LpfD (lpfD), found in Salmonella typhimurium (strain LT2 / SGSC1412 / ATCC 700720).